The chain runs to 651 residues: Far upstream element-binding protein 1 (651 aa).

Disordered regions lie at residues 1–24 (MADY…GVVN) and 40–92 (KIGG…HQQQ). Residue A2 is modified to N-acetylalanine. Phosphoserine is present on residues S48 and S51. The span at 61–73 (RPLEDGDQPDAKK) shows a compositional bias: basic and acidic residues. KH domains follow at residues 96 to 160 (VMTE…KRLL), 181 to 247 (NAVQ…KEMV), and 271 to 335 (NEGI…AEII). S136 is subject to Phosphoserine. T149 carries the post-translational modification Phosphothreonine. Omega-N-methylarginine is present on residues R317, R355, R357, and R359. The KH 4 domain maps to 372–439 (LQEFNFIVPT…QQIDYARQLI (68 aa)). Phosphoserine is present on S411. Residue T428 is modified to Phosphothreonine. 3 disordered regions span residues 443-528 (IGGP…GADP), 545-574 (AQPP…APAG), and 625-651 (TSPQ…HHLY). Positions 464–501 (PHGPPGPPGPGTPMGPYNPAPYNPGPPGPAPHGPPAPY) are enriched in pro residues. Composition is skewed to low complexity over residues 514–528 (QQQA…GADP) and 552–574 (PAGA…APAG). Residue S626 is modified to Phosphoserine.

In terms of assembly, found in a complex with PUF60 and far upstream element (FUSE) DNA segment. Interacts with PUF60 and JTV1. In terms of processing, ubiquitinated. This targets the protein for proteasome-mediated degradation.

It is found in the nucleus. Its function is as follows. Regulates MYC expression by binding to a single-stranded far-upstream element (FUSE) upstream of the MYC promoter. May act both as activator and repressor of transcription. The chain is Far upstream element-binding protein 1 (Fubp1) from Mus musculus (Mouse).